The following is a 288-amino-acid chain: Polyamine aminopropyltransferase (288 aa).

The PABS domain occupies 9–238 (ETLHDQFGQY…GIMTFAWATD (230 aa)). S-methyl-5'-thioadenosine is bound at residue Gln33. His64 and Asp88 together coordinate spermidine. S-methyl-5'-thioadenosine-binding positions include Glu108 and 140–141 (DG). Residue Asp158 is the Proton acceptor of the active site. 158-161 (DCTD) contacts spermidine. Residue Pro165 participates in S-methyl-5'-thioadenosine binding.

The protein belongs to the spermidine/spermine synthase family. In terms of assembly, homodimer or homotetramer.

It localises to the cytoplasm. The enzyme catalyses S-adenosyl 3-(methylsulfanyl)propylamine + putrescine = S-methyl-5'-thioadenosine + spermidine + H(+). It participates in amine and polyamine biosynthesis; spermidine biosynthesis; spermidine from putrescine: step 1/1. In terms of biological role, catalyzes the irreversible transfer of a propylamine group from the amino donor S-adenosylmethioninamine (decarboxy-AdoMet) to putrescine (1,4-diaminobutane) to yield spermidine. This is Polyamine aminopropyltransferase from Shigella dysenteriae serotype 1 (strain Sd197).